The chain runs to 885 residues: Chitin synthase 3 (885 aa).

The segment at Met-1–Ser-59 is disordered. Residues Pro-23–Leu-34 are compositionally biased toward basic and acidic residues. Residues His-36–Tyr-45 are compositionally biased toward polar residues. A run of 6 helical transmembrane segments spans residues Phe-565–Leu-585, Ile-620–Ala-640, Val-650–Ser-670, Ile-707–Met-727, Ser-735–Phe-755, and Leu-837–Leu-857.

This sequence belongs to the chitin synthase family. Class III subfamily.

Its subcellular location is the cell membrane. It catalyses the reaction [(1-&gt;4)-N-acetyl-beta-D-glucosaminyl](n) + UDP-N-acetyl-alpha-D-glucosamine = [(1-&gt;4)-N-acetyl-beta-D-glucosaminyl](n+1) + UDP + H(+). Polymerizes chitin, a structural polymer of the cell wall and septum, by transferring the sugar moiety of UDP-GlcNAc to the non-reducing end of the growing chitin polymer. Is not only stable at different pH, but is also able to tolerate a broad temperature range. With CHS2, plays an important role in virulence. This is Chitin synthase 3 from Exophiala dermatitidis (Black yeast-like fungus).